Here is a 296-residue protein sequence, read N- to C-terminus: ATP synthase gamma chain (296 aa).

It belongs to the ATPase gamma chain family. F-type ATPases have 2 components, CF(1) - the catalytic core - and CF(0) - the membrane proton channel. CF(1) has five subunits: alpha(3), beta(3), gamma(1), delta(1), epsilon(1). CF(0) has three main subunits: a, b and c.

Its subcellular location is the cell inner membrane. Produces ATP from ADP in the presence of a proton gradient across the membrane. The gamma chain is believed to be important in regulating ATPase activity and the flow of protons through the CF(0) complex. In Jannaschia sp. (strain CCS1), this protein is ATP synthase gamma chain.